The chain runs to 433 residues: Meiotically up-regulated gene 131 protein (433 aa).

Polar residues predominate over residues Leu401–Leu412. The interval Leu401–Ala433 is disordered.

It belongs to the UPF0300 family.

The protein resides in the golgi apparatus. Its function is as follows. Has a role in meiosis. In Schizosaccharomyces pombe (strain 972 / ATCC 24843) (Fission yeast), this protein is Meiotically up-regulated gene 131 protein (mug131).